The chain runs to 406 residues: Argininosuccinate synthase (406 aa).

ATP-binding positions include 11 to 19 (AYSGGLDTS) and Ala-38. L-citrulline is bound by residues Tyr-91 and Ser-96. Gly-121 provides a ligand contact to ATP. The L-aspartate site is built by Thr-123, Asn-127, and Asp-128. Asn-127 is an L-citrulline binding site. Residues Arg-131, Ser-181, Ser-190, Glu-266, and Tyr-278 each coordinate L-citrulline.

Belongs to the argininosuccinate synthase family. Type 1 subfamily. As to quaternary structure, homotetramer.

It is found in the cytoplasm. The catalysed reaction is L-citrulline + L-aspartate + ATP = 2-(N(omega)-L-arginino)succinate + AMP + diphosphate + H(+). Its pathway is amino-acid biosynthesis; L-arginine biosynthesis; L-arginine from L-ornithine and carbamoyl phosphate: step 2/3. The polypeptide is Argininosuccinate synthase (Campylobacter jejuni (strain RM1221)).